The following is a 488-amino-acid chain: GTPase Der (488 aa).

2 consecutive EngA-type G domains span residues 3-166 (PVVA…AEAM) and 200-373 (IKLA…DSAT). GTP contacts are provided by residues 9–16 (GRPNVGKS), 56–60 (DTGGI), 118–121 (NKVD), 206–213 (GKPNVGKS), 253–257 (DTAGV), and 318–321 (NKWD). A KH-like domain is found at 374-458 (RRVSTSMLTR…PIQLRFHEGD (85 aa)).

This sequence belongs to the TRAFAC class TrmE-Era-EngA-EngB-Septin-like GTPase superfamily. EngA (Der) GTPase family. Associates with the 50S ribosomal subunit.

GTPase that plays an essential role in the late steps of ribosome biogenesis. The protein is GTPase Der of Shewanella amazonensis (strain ATCC BAA-1098 / SB2B).